A 467-amino-acid polypeptide reads, in one-letter code: Glutamine synthetase (467 aa).

The region spanning 11 to 95 (HDVKWIDLRF…IVCDIIEPST (85 aa)) is the GS beta-grasp domain. Residues 103–467 (PRAIARRAEE…PLEYDLYYSV (365 aa)) form the GS catalytic domain. Residues Glu-128 and Glu-130 each coordinate Mg(2+). Glu-206 serves as a coordination point for ATP. Mg(2+) contacts are provided by Glu-211 and Glu-219. L-glutamate contacts are provided by residues 263–264 (NG) and Gly-264. His-268 contacts Mg(2+). ATP contacts are provided by residues 270–272 (HMS) and Ser-272. L-glutamate is bound by residues Arg-320, Glu-326, and Arg-338. Arg-338, Arg-343, and Lys-351 together coordinate ATP. Glu-356 contributes to the Mg(2+) binding site. Arg-358 provides a ligand contact to L-glutamate. O-AMP-tyrosine is present on Tyr-396.

Belongs to the glutamine synthetase family. As to quaternary structure, oligomer of 12 subunits arranged in the form of two hexameric ring. Requires Mg(2+) as cofactor.

The protein resides in the cytoplasm. It catalyses the reaction L-glutamate + NH4(+) + ATP = L-glutamine + ADP + phosphate + H(+). The activity of this enzyme could be controlled by adenylation under conditions of abundant glutamine. Catalyzes the ATP-dependent biosynthesis of glutamine from glutamate and ammonia. The chain is Glutamine synthetase from Azotobacter vinelandii.